The following is a 113-amino-acid chain: Cell division protein FtsB (113 aa).

Residues 1 to 3 (MRL) lie on the Cytoplasmic side of the membrane. The helical transmembrane segment at 4–21 (ISLLLFVLLLAIQYPLWL) threads the bilayer. At 22–113 (GKGGWLRVWD…PNSVAGRGGH (92 aa)) the chain is on the periplasmic side. A coiled-coil region spans residues 34-64 (RQVNEQTVHNQALKLRNAKLEGEVKDLQDGT). Residues 93–113 (KVSATPPLPPPPNSVAGRGGH) are disordered.

This sequence belongs to the FtsB family. As to quaternary structure, part of a complex composed of FtsB, FtsL and FtsQ.

It localises to the cell inner membrane. Essential cell division protein. May link together the upstream cell division proteins, which are predominantly cytoplasmic, with the downstream cell division proteins, which are predominantly periplasmic. This Cupriavidus metallidurans (strain ATCC 43123 / DSM 2839 / NBRC 102507 / CH34) (Ralstonia metallidurans) protein is Cell division protein FtsB.